The sequence spans 834 residues: 5-hydroxytryptamine receptor 2A (834 aa).

Residues 1-230 (MAHETSFNDA…TQLLRMAVTS (230 aa)) are Extracellular-facing. Positions 56 to 75 (TDDGQLEDTNNNNNSKRYYS) are disordered. N-linked (GlcNAc...) asparagine glycosylation is found at Asn68, Asn97, Asn161, Asn175, Asn183, Asn194, Asn203, and Asn209. Residues 231–253 (VLLGLMILVTIIGNVFVIAAIIL) form a helical membrane-spanning segment. The Cytoplasmic segment spans residues 254–263 (ERNLQNVANY). A helical transmembrane segment spans residues 264 to 285 (LVASLAVADLFVACLVMPLGAV). Residues 286 to 300 (YEISQGWILGPELCD) lie on the Extracellular side of the membrane. A disulfide bridge connects residues Cys299 and Cys378. Residues 301-322 (IWTSCDVLCCTASILHLVAIAV) traverse the membrane as a helical segment. Residues 323 to 341 (DRYWAVTNIDYIHSRTSNR) are Cytoplasmic-facing. A helical membrane pass occupies residues 342-364 (VFMMIFCVWTAAVIVSLAPQFGW). Topologically, residues 365 to 391 (KDPDYLQRIEQQKCMVSQDVSYQVFAT) are extracellular. A helical membrane pass occupies residues 392 to 413 (CCTFYVPLLVILALYWKIYQTA). At 414 to 752 (RKRIHRRRPR…AKRERKAAKT (339 aa)) the chain is on the cytoplasmic side. Disordered regions lie at residues 420 to 442 (RRPR…ATDT), 460 to 516 (KTGS…STSG), 531 to 599 (QQGK…SEDQ), 617 to 640 (LEQV…TSNA), and 674 to 743 (STLT…TLEA). Polar residues-rich tracts occupy residues 482-502 (GNST…SNVD) and 532-542 (QGKSTAKSSAA). The segment covering 551–564 (RQEDDGQRPEHGEQ) has biased composition (basic and acidic residues). Positions 565-575 (EDREELEDQDE) are enriched in acidic residues. Low complexity predominate over residues 582–593 (TTATSATTAAGT). Over residues 674–694 (STLTSCNQSHPLCGTANESPS) the composition is skewed to polar residues. Residues 702 to 723 (QPTTPQQQPHQQAHQQQQQQQQ) show a composition bias toward low complexity. The chain crosses the membrane as a helical span at residues 753–776 (LAIITGAFVVCWLPFFVMALTMPL). At 777-785 (CAACQISDS) the chain is on the extracellular side. The helical transmembrane segment at 786 to 808 (VASLFLWLGYFNSTLNPVIYTIF) threads the bilayer. Topologically, residues 809–834 (SPEFRQAFKRILFGGHRPVHYRSGKL) are cytoplasmic.

It belongs to the G-protein coupled receptor 1 family.

It localises to the cell membrane. This is one of the several different receptors for 5-hydroxytryptamine (serotonin), a biogenic hormone that functions as a neurotransmitter, a hormone, and a mitogen. The activity of this receptor is mediated by G proteins which inhibit adenylate cyclase. In Drosophila melanogaster (Fruit fly), this protein is 5-hydroxytryptamine receptor 2A (5-HT1A).